The sequence spans 372 residues: DNA replication and repair protein RecF (372 aa).

Residue 30–37 (GENGQGKT) coordinates ATP.

This sequence belongs to the RecF family.

Its subcellular location is the cytoplasm. The RecF protein is involved in DNA metabolism; it is required for DNA replication and normal SOS inducibility. RecF binds preferentially to single-stranded, linear DNA. It also seems to bind ATP. The sequence is that of DNA replication and repair protein RecF from Anaeromyxobacter sp. (strain K).